A 554-amino-acid polypeptide reads, in one-letter code: Glucose-6-phosphate isomerase (554 aa).

Glu-359 serves as the catalytic Proton donor. Catalysis depends on residues His-390 and Lys-518.

This sequence belongs to the GPI family.

The protein localises to the cytoplasm. It catalyses the reaction alpha-D-glucose 6-phosphate = beta-D-fructose 6-phosphate. It participates in carbohydrate biosynthesis; gluconeogenesis. The protein operates within carbohydrate degradation; glycolysis; D-glyceraldehyde 3-phosphate and glycerone phosphate from D-glucose: step 2/4. Functionally, catalyzes the reversible isomerization of glucose-6-phosphate to fructose-6-phosphate. In Pseudomonas aeruginosa (strain LESB58), this protein is Glucose-6-phosphate isomerase.